The following is a 119-amino-acid chain: Large ribosomal subunit protein uL18 (119 aa).

Residues 1–25 (MITKIDKNKVRKKRHARVRSKISGT) are disordered. The segment covering 9 to 20 (KVRKKRHARVRS) has biased composition (basic residues).

It belongs to the universal ribosomal protein uL18 family. Part of the 50S ribosomal subunit; part of the 5S rRNA/L5/L18/L25 subcomplex. Contacts the 5S and 23S rRNAs.

Functionally, this is one of the proteins that bind and probably mediate the attachment of the 5S RNA into the large ribosomal subunit, where it forms part of the central protuberance. The sequence is that of Large ribosomal subunit protein uL18 from Listeria monocytogenes serotype 4b (strain CLIP80459).